The primary structure comprises 74 residues: Small ribosomal subunit protein bS18 (74 aa).

This sequence belongs to the bacterial ribosomal protein bS18 family. Part of the 30S ribosomal subunit. Forms a tight heterodimer with protein bS6.

In terms of biological role, binds as a heterodimer with protein bS6 to the central domain of the 16S rRNA, where it helps stabilize the platform of the 30S subunit. The polypeptide is Small ribosomal subunit protein bS18 (Rhizorhabdus wittichii (strain DSM 6014 / CCUG 31198 / JCM 15750 / NBRC 105917 / EY 4224 / RW1) (Sphingomonas wittichii)).